We begin with the raw amino-acid sequence, 752 residues long: Zinc finger protein 184 (752 aa).

The 72-residue stretch at 28–99 (VTFKDVIVDF…EPSIPVGTPG (72 aa)) folds into the KRAB domain. S117, S122, and S200 each carry phosphoserine. A Glycyl lysine isopeptide (Lys-Gly) (interchain with G-Cter in SUMO2) cross-link involves residue K207. C2H2-type zinc fingers lie at residues 223–245 (CKCN…QRTH), 251–273 (YKCN…QRIH), 279–301 (YKCD…QRIH), 307–329 (YKCD…QRIH), 335–357 (YTCN…QKIH), 363–385 (FKCD…QKIH), 391–413 (YKCN…HMIH), 419–441 (YECN…QKTH), 447–469 (YDCA…LKIH), 475–497 (YKCN…RRIH), 503–525 (FECS…QKTH), 531–553 (YECK…ERIH), 559–581 (YQCH…RKIH), 587–609 (YKCN…KRIH), 615–637 (YECA…QKTH), 643–665 (YHCN…QRIH), 671–693 (YKCN…QNTH), 699–721 (YNCN…QRIH), and 727–749 (FGCN…QRLH).

The protein belongs to the krueppel C2H2-type zinc-finger protein family.

The protein localises to the nucleus. Functionally, may be involved in transcriptional regulation. This Bos taurus (Bovine) protein is Zinc finger protein 184 (ZNF184).